Reading from the N-terminus, the 476-residue chain is MDLETSEISNYKSSVVLSKLASNEQHGENSPYFDGWKAYDNDPFHLVNNLNGVIQMGLAENQLSVDLIEEWIKRNPKASICTNDGIESFRRIANFQDYHGLPEFTNAIAKFMEKTRGGKVKFDAKRVVMAGGATGANETLILCLADPGDAFLVPTPYYPGFNRDLRWRSGVQLLPISCKSCNNFKITIEAIEEAYEKGQQANVKIKGLILTNPCNPLGTILDRDTLKKISTFTNEHNIHLVCDEIYAATVFNSPKFVSIAEIINEDNCINKDLVHIVSSLSKDLGFPGFRVGIVYSFNDDVVNCARKMSSFGLVSTQTQHLLAFMLSDDEFVEEFLIESAKRLRERYEKFTRGLEEIGIKCLESNAGVYCWMDLRSLLKEATLDAEMSLWKLIINEVKLNVSPGSSFNCSEVGWFRVCFANIDDQTMEIALARIRMFMDAYNNVNKNGVMKNKHNGRGTTYDLTPQMGSTMKMLLA.

Residue lysine 282 is modified to N6-(pyridoxal phosphate)lysine.

The protein belongs to the class-I pyridoxal-phosphate-dependent aminotransferase family. In terms of assembly, homodimer. Requires pyridoxal 5'-phosphate as cofactor.

The catalysed reaction is S-adenosyl-L-methionine = 1-aminocyclopropane-1-carboxylate + S-methyl-5'-thioadenosine + H(+). It functions in the pathway alkene biosynthesis; ethylene biosynthesis via S-adenosyl-L-methionine; ethylene from S-adenosyl-L-methionine: step 1/2. Its function is as follows. Catalyzes the formation of 1-aminocyclopropane-1-carboxylate, a direct precursor of ethylene in higher plants. In Solanum lycopersicum (Tomato), this protein is 1-aminocyclopropane-1-carboxylate synthase 4 (ACS4).